A 135-amino-acid polypeptide reads, in one-letter code: Large ribosomal subunit protein eL32 (135 aa).

A Glycyl lysine isopeptide (Lys-Gly) (interchain with G-Cter in SUMO2) cross-link involves residue Lys9. Lys50 bears the N6-succinyllysine mark. The residue at position 62 (Ser62) is a Phosphoserine.

It belongs to the eukaryotic ribosomal protein eL32 family. As to quaternary structure, component of the large ribosomal subunit.

The protein resides in the cytoplasm. Functionally, component of the large ribosomal subunit. The ribosome is a large ribonucleoprotein complex responsible for the synthesis of proteins in the cell. This is Large ribosomal subunit protein eL32 (RPL32) from Oryctolagus cuniculus (Rabbit).